The following is an 801-amino-acid chain: MIKTILIKLILLVIFCYHFLFAEEDVISTPPGYYDLIRHKRDPPITEYQSSQDTDLYYPDVCRNALRPLDYPWINEFAPIFFPGFNMGGFNSIFIPKNRSMIFRTPFQDSLVTLHVVCIEGTFIVEGNRFLFANTIIVLPGGRFESTTGIEFYDENDSGVSFYPDLPKDPSGFFPGILVLGGSISVVGKEPIVYRASRINDSSIEISPPVPEIIISPNPWDRVYKLVKIFTELYPLGFYCRYNTDEVGKILSLSSYLLYPFPPVSENDKIIRVLVETDRQQTVIPTNIYKREYATKGSIYITGGSNAYFKNIFFKNLGFTKNEPYNDTKLIFSPNDTNVVTDIIMGTNQKFRSSLYIESSKNVTIEGCAFVENDLTRSPLVFFDSNVKISNSLISSKSGSNIIALHGTDSIQSSNNSYLLEKIDLASWDVERNNNIDCGNQGNGIFSISPNINSNGDYFSGQQTAFNYYFIPNNSVNSNQDNSSLNSRPIEIIIKDSMFNPTASNGSLNKYFLNINTDGNKTISTYFTVRDLKTSHAINMNLNNSAIAFYNLKGGEGFKMEGNVERLDIIGSIINSNGSIKNISTSTTNIIDSYIYSSSSDIQPFNNQIYGSLITPYYYSDSNTLDKFEIKSILPNAPIQIVSGSLFNVSVQIQTLSSSVSIDNISCIFTSSVINTTVVQVNSNYSCILPLNITNEEGPLNLRVTLVNNTSPSSVSSDNYLYIIDFPEITVFNTYEFYSGWLMDNSNSSQQISFGGNSFKNGCNKVDSNCTISQNSKYSTVFSQLSITLPSNFKTKTHWMK.

The signal sequence occupies residues 1 to 22 (MIKTILIKLILLVIFCYHFLFA).

The protein belongs to the GDT family.

The protein resides in the secreted. The polypeptide is Growth-differentiation transition protein 7 (gdt7) (Dictyostelium discoideum (Social amoeba)).